The primary structure comprises 530 residues: Transcription factor SPT20 homolog (530 aa).

Phosphoserine is present on Ser296. The interval 419 to 530 is disordered; sequence CPVKMSHSSS…PASSSQRHES (112 aa). 2 stretches are compositionally biased toward low complexity: residues 424-436 and 466-475; these read SHSS…LNSG and SSSGNSSSGN. Thr490 carries the post-translational modification Phosphothreonine. A compositionally biased stretch (low complexity) spans 514-530; that stretch reads LSPAALSPASSSQRHES. 2 positions are modified to phosphoserine: Ser515 and Ser520.

This sequence belongs to the SPT20 family. Interacts with ATG9A. Interacts with MAPK14.

Functionally, required for MAP kinase p38 (MAPK11, MAPK12, MAPK13 and/or MAPK14) activation during gastrulation. Required for down-regulation of E-cadherin during gastrulation by regulating E-cadherin protein level downstream from NCK-interacting kinase (NIK) and independently of the regulation of transcription by FGF signaling and Snail. Required for starvation-induced ATG9A trafficking during autophagy. The chain is Transcription factor SPT20 homolog (Supt20h) from Rattus norvegicus (Rat).